Consider the following 327-residue polypeptide: MVMINFQHIDGEALLAQLQPLLGNIRGKLTPNVEMRKVTWFRTGGLAELFYQPVDEEDLALFLHNLPECVPVTIVGIGSNLLVRDGGVPGVVIRLSPKNFGQVQQVSSKGFLVGAGTADKHLAAAALKAEIAGFHFYHGIPGGLGGALKMNAGANGVETAARVVEVYALDRKGQRHILSLKDMHYSYRHCDIPEDFIFTAALLEGEPGNKDAIRAAMDEVALHRETVQPIREKTGGSTFKNPKDTSAWRVIDEAGCRGLQIGGAQMSEMHCNFMINTGQATGYDLEALGETVRARVFAHSAHLLQWEIERIGQFEQGRSVASFDPFH.

The FAD-binding PCMH-type domain occupies Arg42–His223. Arg188 is an active-site residue. Catalysis depends on Ser237, which acts as the Proton donor. The active site involves Glu307.

This sequence belongs to the MurB family. The cofactor is FAD.

It is found in the cytoplasm. It carries out the reaction UDP-N-acetyl-alpha-D-muramate + NADP(+) = UDP-N-acetyl-3-O-(1-carboxyvinyl)-alpha-D-glucosamine + NADPH + H(+). Its pathway is cell wall biogenesis; peptidoglycan biosynthesis. In terms of biological role, cell wall formation. In Bartonella tribocorum (strain CIP 105476 / IBS 506), this protein is UDP-N-acetylenolpyruvoylglucosamine reductase.